The sequence spans 444 residues: Squalene synthase ERG9 (444 aa).

Residues 421 to 441 (FNMVLSIILSVLLGFYYIYTL) form a helical membrane-spanning segment.

Belongs to the phytoene/squalene synthase family. Mg(2+) serves as cofactor.

It localises to the endoplasmic reticulum membrane. It is found in the microsome. The catalysed reaction is 2 (2E,6E)-farnesyl diphosphate + NADPH + H(+) = squalene + 2 diphosphate + NADP(+). It carries out the reaction 2 (2E,6E)-farnesyl diphosphate + NADH + H(+) = squalene + 2 diphosphate + NAD(+). It participates in terpene metabolism; lanosterol biosynthesis; lanosterol from farnesyl diphosphate: step 1/3. In terms of biological role, squalene synthase; part of the third module of ergosterol biosynthesis pathway that includes the late steps of the pathway. ERG9 produces squalene from 2 farnesyl pyrophosphate moieties. The third module or late pathway involves the ergosterol synthesis itself through consecutive reactions that mainly occur in the endoplasmic reticulum (ER) membrane. Firstly, the squalene synthase ERG9 catalyzes the condensation of 2 farnesyl pyrophosphate moieties to form squalene, which is the precursor of all steroids. Squalene synthase is crucial for balancing the incorporation of farnesyl diphosphate (FPP) into sterol and nonsterol isoprene synthesis. Secondly, the squalene epoxidase ERG1 catalyzes the stereospecific oxidation of squalene to (S)-2,3-epoxysqualene, which is considered to be a rate-limiting enzyme in steroid biosynthesis. Then, the lanosterol synthase ERG7 catalyzes the cyclization of (S)-2,3 oxidosqualene to lanosterol, a reaction that forms the sterol core. In the next steps, lanosterol is transformed to zymosterol through a complex process involving various demethylation, reduction and desaturation reactions. The lanosterol 14-alpha-demethylase ERG11 (also known as CYP51) catalyzes C14-demethylation of lanosterol to produce 4,4'-dimethyl cholesta-8,14,24-triene-3-beta-ol, which is critical for ergosterol biosynthesis. The C-14 reductase ERG24 reduces the C14=C15 double bond of 4,4-dimethyl-cholesta-8,14,24-trienol to produce 4,4-dimethyl-cholesta-8,24-dienol. 4,4-dimethyl-cholesta-8,24-dienol is substrate of the C-4 demethylation complex ERG25-ERG26-ERG27 in which ERG25 catalyzes the three-step monooxygenation required for the demethylation of 4,4-dimethyl and 4alpha-methylsterols, ERG26 catalyzes the oxidative decarboxylation that results in a reduction of the 3-beta-hydroxy group at the C-3 carbon to an oxo group, and ERG27 is responsible for the reduction of the keto group on the C-3. ERG28 has a role as a scaffold to help anchor ERG25, ERG26 and ERG27 to the endoplasmic reticulum and ERG29 regulates the activity of the iron-containing C4-methylsterol oxidase ERG25. Then, the sterol 24-C-methyltransferase ERG6 catalyzes the methyl transfer from S-adenosyl-methionine to the C-24 of zymosterol to form fecosterol. The C-8 sterol isomerase ERG2 catalyzes the reaction which results in unsaturation at C-7 in the B ring of sterols and thus converts fecosterol to episterol. The sterol-C5-desaturase ERG3 then catalyzes the introduction of a C-5 double bond in the B ring to produce 5-dehydroepisterol. The C-22 sterol desaturase ERG5 further converts 5-dehydroepisterol into ergosta-5,7,22,24(28)-tetraen-3beta-ol by forming the C-22(23) double bond in the sterol side chain. Finally, ergosta-5,7,22,24(28)-tetraen-3beta-ol is substrate of the C-24(28) sterol reductase ERG4 to produce ergosterol. The sequence is that of Squalene synthase ERG9 from Saccharomyces cerevisiae (strain ATCC 204508 / S288c) (Baker's yeast).